The following is a 287-amino-acid chain: MAIRKFKPYTPGTRQRVVTDFSEITSSKPERSLIVSKHRVKGRNNRGVITCRHRGGGHKRQYRLVDFRRDKRNINAKVAAIHYDPHRNARLALLFYEDGEKRYIIAPAGVKVGQNVISGESVPIEDGNAMPLSVMPLGSSVHCVELYAGRGAQMVRSAGASAQVMAKEGDYVALKLPSTEVRLVRKECYATLGEVGNSEIRNTSLGKAGRRRWLGRRPQVRGSVMNPCDHPHGGGEGKAPIGRAGPVTPWGKPALGLKTRKKNKPSNKLVVRRRRRISKRSRGGRDS.

Residues 221-287 (RGSVMNPCDH…SKRSRGGRDS (67 aa)) form a disordered region. The segment covering 258–287 (KTRKKNKPSNKLVVRRRRRISKRSRGGRDS) has biased composition (basic residues).

The protein belongs to the universal ribosomal protein uL2 family. As to quaternary structure, part of the 50S ribosomal subunit. Forms a bridge to the 30S subunit in the 70S ribosome.

One of the primary rRNA binding proteins. Required for association of the 30S and 50S subunits to form the 70S ribosome, for tRNA binding and peptide bond formation. It has been suggested to have peptidyltransferase activity; this is somewhat controversial. Makes several contacts with the 16S rRNA in the 70S ribosome. This chain is Large ribosomal subunit protein uL2, found in Prochlorococcus marinus (strain MIT 9301).